A 611-amino-acid chain; its full sequence is Phosphatidylinositol 3,4,5-trisphosphate 3-phosphatase and protein-tyrosine-phosphatase PTEN2A (611 aa).

Disordered regions lie at residues 1–42 (MSSE…GVAS) and 87–109 (GIRL…SSAT). The residue at position 91 (S91) is a Phosphoserine. The span at 100–109 (TTTEGTSSAT) shows a compositional bias: low complexity. A Phosphatase tensin-type domain is found at 145–324 (RRYQEGGFDL…KYFERILTYF (180 aa)). C263 (phosphocysteine intermediate) is an active-site residue. Residues 331 to 458 (GRRCMLRGFR…FMVEVVLADI (128 aa)) enclose the C2 tensin-type domain. Residues 462–486 (IPTNPSSETASKTPEETSAANSSPV) show a composition bias toward polar residues. A disordered region spans residues 462–589 (IPTNPSSETA…VNASSSSESE (128 aa)). Residues 495-507 (PDKETENPDKDDV) show a composition bias toward basic and acidic residues. Position 509 is a phosphoserine (S509). Polar residues-rich tracts occupy residues 514-530 (DSTG…SQTP) and 549-565 (VSIS…QGVT).

This sequence belongs to the PTEN phosphatase protein family. Expressed in seedlings, roots, stems, leaves, flowers and siliques. However, at protein level, not observed in older leaves and mature siliques.

It carries out the reaction O-phospho-L-tyrosyl-[protein] + H2O = L-tyrosyl-[protein] + phosphate. The catalysed reaction is a 1,2-diacyl-sn-glycero-3-phospho-(1D-myo-inositol-3,4,5-trisphosphate) + H2O = a 1,2-diacyl-sn-glycero-3-phospho-(1D-myo-inositol-4,5-bisphosphate) + phosphate. Binds phosphatidic acid. Protein tyrosine phosphatase that also exhibits lipid phosphatase activity. Hydrolyzed poorly p-nitrophenyl phosphate (p-NPP). Can use PtdIns isomers as substrates. Removes efficiently phosphate from the D3 position of the inositol ring, less from the D4 position and not at all from the D5 position on monophosphorylated PtdIns isomers (PIPs). The presence of a phosphate group in the D5 position on PIP(2) isomers reduces lipid phosphatase activity. Mostly active on PtdIns(3)P and PtdIns(3,4)P(2), to a lower extent, on PtdIns(4)P and PtdIns(3,5)P(2), but barely against PtdIns(3,4,5)P(3) as substrate. The protein is Phosphatidylinositol 3,4,5-trisphosphate 3-phosphatase and protein-tyrosine-phosphatase PTEN2A of Arabidopsis thaliana (Mouse-ear cress).